The sequence spans 136 residues: Transcription antitermination protein NusB (136 aa).

This sequence belongs to the NusB family.

Its function is as follows. Involved in transcription antitermination. Required for transcription of ribosomal RNA (rRNA) genes. Binds specifically to the boxA antiterminator sequence of the ribosomal RNA (rrn) operons. The protein is Transcription antitermination protein NusB of Pseudarthrobacter chlorophenolicus (strain ATCC 700700 / DSM 12829 / CIP 107037 / JCM 12360 / KCTC 9906 / NCIMB 13794 / A6) (Arthrobacter chlorophenolicus).